A 209-amino-acid chain; its full sequence is Glutathione S-transferase (209 aa).

The 85-residue stretch at 7–91 (FFFFFFFFFS…YLSKKYNISG (85 aa)) folds into the GST N-terminal domain. Glutathione-binding positions include 62-63 (QV), 75-76 (QS), Asp-109, Lys-121, and Thr-125. In terms of domain architecture, GST C-terminal spans 93–209 (GELNEFYADM…YIANRKESVY (117 aa)).

Belongs to the GST superfamily. As to quaternary structure, homodimer. In the absence of ligands two homodimers may interact to form a tetramer.

It carries out the reaction RX + glutathione = an S-substituted glutathione + a halide anion + H(+). Its function is as follows. Conjugation of reduced glutathione to a wide number of exogenous and endogenous hydrophobic electrophiles. May also function as a storage protein or ligandin for parasitotoxic ferriprotoporphyrin IX (hemin). The protein is Glutathione S-transferase of Plasmodium yoelii yoelii.